The following is a 904-amino-acid chain: Protein abrupt (904 aa).

The span at 1–15 shows a compositional bias: polar residues; it reads MTESTQLQTAENNNA. Disordered regions lie at residues 1–30 and 53–72; these read MTES…TSSV and GSAL…HQQQ. The BTB domain maps to 103–168; that stretch reads VDVTLACDER…MYNGEVNVSH (66 aa). Residues 204 to 238 show a composition bias toward low complexity; the sequence is SHNSSNNNNNNSSSNNSLSNNNNNNNNNAESSNHN. Disordered stretches follow at residues 204-287, 349-390, 411-438, and 451-501; these read SHNS…LNSP, ASSA…PPPQ, LLDR…KDRE, and ALEN…NQRS. Positions 239–253 are enriched in polar residues; the sequence is KISSYLSPNQTSAAC. A compositionally biased stretch (low complexity) spans 254 to 286; the sequence is NNSSNSNSNNHSSSHNNSSSNNISGSLNSSLNS. Positions 429–438 are enriched in basic and acidic residues; sequence SGRDTSKDRE. Residues 452 to 461 are compositionally biased toward polar residues; sequence LENSNGQQAN. Position 474 is a phosphoserine (S474). Basic and acidic residues predominate over residues 481 to 500; it reads PSDRGDGQHDGTLDGIDNQR. 2 C2H2-type zinc fingers span residues 544-567 and 573-596; these read RPCP…EDKH and YRCV…SRQH. Disordered stretches follow at residues 633 to 696 and 832 to 904; these read ELRA…GGSS and AAGN…VHNT. Residues 642-655 show a composition bias toward gly residues; the sequence is GGSGSSGGGGGGGS. A compositionally biased stretch (acidic residues) spans 671-682; it reads DDAEDSDDDPED. A phosphoserine mark is found at S837, S846, and S868. Positions 851–868 are enriched in basic and acidic residues; the sequence is MGHDEMAENDGDMRREGS. The segment covering 876–886 has biased composition (polar residues); sequence DNNQSGSNHEV. S889 and S896 each carry phosphoserine.

As to expression, expressed in CNS midline cells during embryonic stages 9-13. Expression also seen in cells of the stomagastric nervous system. Segmentally repeated stripes of ectodermal expression appear at stage 11 that become uniform by stage 12 and throughout embryogenesis. Expressed at variable levels in somatic muscles from stage 16 and in all imaginal disks during larval development. Expression is seen in da neurons that grow in two-dimensional dendrites underneath the epidermis during late embryonic, larval, and pupal stages.

It localises to the nucleus. Its function is as follows. Expression is vital for development; may be involved in transcriptional regulation. In embryos, muscle specific expression is required for segmental nerve b (SNb) motoneuron target recognition within ventral longitudinal muscles. Has a role in establishing and maintaining embryonic muscle attachments, adult sensory cell formation (macrochaetae) and morphogenesis of adult appendages (legs, antenna aristae and male external genitalia). Has a role in the morphogenesis of the class I dendritic neurons: selective expression of ab in class I da neurons plays a pivotal role in forming dendritic arbors, which are characteristic of the class I cells. The development of more complex arbors of class II-IV neurons depends on the absence of ab. This Drosophila melanogaster (Fruit fly) protein is Protein abrupt (ab).